Here is a 109-residue protein sequence, read N- to C-terminus: Small ribosomal subunit protein eS25z (109 aa).

Positions 1-36 (MAPKKDKVPPPSSKPAKSGGGKQKKKKWSKGKQKEK) are disordered. A compositionally biased stretch (basic residues) spans 22 to 31 (KQKKKKWSKG).

The protein belongs to the eukaryotic ribosomal protein eS25 family.

In Arabidopsis thaliana (Mouse-ear cress), this protein is Small ribosomal subunit protein eS25z (RPS25A).